Here is a 505-residue protein sequence, read N- to C-terminus: Lysine--tRNA ligase (505 aa).

Mg(2+)-binding residues include Glu-415 and Glu-422.

This sequence belongs to the class-II aminoacyl-tRNA synthetase family. In terms of assembly, homodimer. Mg(2+) serves as cofactor.

Its subcellular location is the cytoplasm. It catalyses the reaction tRNA(Lys) + L-lysine + ATP = L-lysyl-tRNA(Lys) + AMP + diphosphate. In Escherichia coli O157:H7, this protein is Lysine--tRNA ligase.